Reading from the N-terminus, the 232-residue chain is Charged multivesicular body protein 4c (232 aa).

Disordered stretches follow at residues M1–Q23 and E172–T232. The segment at M1–V153 is intramolecular interaction with C-terminus. Low complexity predominate over residues S11–Q23. 2 coiled-coil regions span residues S21 to E50 and L125 to S182. An intramolecular interaction with N-terminus region spans residues Q154–T232. Phosphoserine; by AURKB is present on S210.

Belongs to the SNF7 family. In terms of assembly, probable core component of the endosomal sorting required for transport complex III (ESCRT-III). ESCRT-III components are thought to multimerize to form a flat lattice on the perimeter membrane of the endosome. Several assembly forms of ESCRT-III may exist that interact and act sequentially. Self-associates. Interacts with CHMP2A. Interacts with CHMP4A. Interacts with CHMP4B. Interacts with CHMP6. Interacts with VPS4A. Interacts with PDCD6IP; the interaction is direct. In terms of processing, phosphorylated at Ser-210 by AURKB during cytokinesis: together with ZFYVE19/ANCHR, phosphorylated CHMP4C retains abscission-competent VPS4 (VPS4A and/or VPS4B) at the midbody ring until abscission checkpoint signaling is terminated at late cytokinesis.

Its subcellular location is the cytoplasm. The protein resides in the cytosol. It is found in the late endosome membrane. It localises to the midbody. The protein localises to the midbody ring. Its function is as follows. Probable core component of the endosomal sorting required for transport complex III (ESCRT-III) which is involved in multivesicular bodies (MVBs) formation and sorting of endosomal cargo proteins into MVBs. MVBs contain intraluminal vesicles (ILVs) that are generated by invagination and scission from the limiting membrane of the endosome and mostly are delivered to lysosomes enabling degradation of membrane proteins, such as stimulated growth factor receptors, lysosomal enzymes and lipids. The MVB pathway appears to require the sequential function of ESCRT-O, -I,-II and -III complexes. ESCRT-III proteins mostly dissociate from the invaginating membrane before the ILV is released. The ESCRT machinery also functions in topologically equivalent membrane fission events, such as the terminal stages of cytokinesis. Key component of the cytokinesis checkpoint, a process required to delay abscission to prevent both premature resolution of intercellular chromosome bridges and accumulation of DNA damage: upon phosphorylation by AURKB, together with ZFYVE19/ANCHR, retains abscission-competent VPS4 (VPS4A and/or VPS4B) at the midbody ring until abscission checkpoint signaling is terminated at late cytokinesis. Deactivation of AURKB results in dephosphorylation of CHMP4C followed by its dissociation from ANCHR and VPS4 and subsequent abscission. ESCRT-III proteins are believed to mediate the necessary vesicle extrusion and/or membrane fission activities, possibly in conjunction with the AAA ATPase VPS4. CHMP4A/B/C are required for the exosomal release of SDCBP, CD63 and syndecan. This chain is Charged multivesicular body protein 4c (Chmp4c), found in Rattus norvegicus (Rat).